A 327-amino-acid polypeptide reads, in one-letter code: Aspartate--ammonia ligase (327 aa).

Belongs to the class-II aminoacyl-tRNA synthetase family. AsnA subfamily.

The protein localises to the cytoplasm. It catalyses the reaction L-aspartate + NH4(+) + ATP = L-asparagine + AMP + diphosphate + H(+). Its pathway is amino-acid biosynthesis; L-asparagine biosynthesis; L-asparagine from L-aspartate (ammonia route): step 1/1. The polypeptide is Aspartate--ammonia ligase (Mycoplasmoides gallisepticum (strain R(low / passage 15 / clone 2)) (Mycoplasma gallisepticum)).